Reading from the N-terminus, the 371-residue chain is Chorismate synthase (371 aa).

2 residues coordinate NADP(+): R48 and R54. Residues 125–127 (RSS), 238–239 (NA), G278, 293–297 (KPTSS), and R319 each bind FMN.

This sequence belongs to the chorismate synthase family. As to quaternary structure, homotetramer. The cofactor is FMNH2.

The enzyme catalyses 5-O-(1-carboxyvinyl)-3-phosphoshikimate = chorismate + phosphate. It functions in the pathway metabolic intermediate biosynthesis; chorismate biosynthesis; chorismate from D-erythrose 4-phosphate and phosphoenolpyruvate: step 7/7. Catalyzes the anti-1,4-elimination of the C-3 phosphate and the C-6 proR hydrogen from 5-enolpyruvylshikimate-3-phosphate (EPSP) to yield chorismate, which is the branch point compound that serves as the starting substrate for the three terminal pathways of aromatic amino acid biosynthesis. This reaction introduces a second double bond into the aromatic ring system. The chain is Chorismate synthase from Saccharophagus degradans (strain 2-40 / ATCC 43961 / DSM 17024).